A 137-amino-acid polypeptide reads, in one-letter code: ATP synthase epsilon chain (137 aa).

It belongs to the ATPase epsilon chain family. In terms of assembly, F-type ATPases have 2 components, CF(1) - the catalytic core - and CF(0) - the membrane proton channel. CF(1) has five subunits: alpha(3), beta(3), gamma(1), delta(1), epsilon(1). CF(0) has three main subunits: a, b and c.

The protein localises to the cell membrane. Produces ATP from ADP in the presence of a proton gradient across the membrane. In Syntrophomonas wolfei subsp. wolfei (strain DSM 2245B / Goettingen), this protein is ATP synthase epsilon chain.